Consider the following 104-residue polypeptide: Pyrimidine/purine nucleoside phosphorylase (104 aa).

This sequence belongs to the nucleoside phosphorylase PpnP family.

The enzyme catalyses a purine D-ribonucleoside + phosphate = a purine nucleobase + alpha-D-ribose 1-phosphate. It catalyses the reaction adenosine + phosphate = alpha-D-ribose 1-phosphate + adenine. The catalysed reaction is cytidine + phosphate = cytosine + alpha-D-ribose 1-phosphate. It carries out the reaction guanosine + phosphate = alpha-D-ribose 1-phosphate + guanine. The enzyme catalyses inosine + phosphate = alpha-D-ribose 1-phosphate + hypoxanthine. It catalyses the reaction thymidine + phosphate = 2-deoxy-alpha-D-ribose 1-phosphate + thymine. The catalysed reaction is uridine + phosphate = alpha-D-ribose 1-phosphate + uracil. It carries out the reaction xanthosine + phosphate = alpha-D-ribose 1-phosphate + xanthine. Catalyzes the phosphorolysis of diverse nucleosides, yielding D-ribose 1-phosphate and the respective free bases. Can use uridine, adenosine, guanosine, cytidine, thymidine, inosine and xanthosine as substrates. Also catalyzes the reverse reactions. This Herminiimonas arsenicoxydans protein is Pyrimidine/purine nucleoside phosphorylase.